Reading from the N-terminus, the 521-residue chain is Adenosylhomocysteinase-like 1 (521 aa).

The disordered stretch occupies residues 1–92; sequence MNNLADTVVV…EKVQKNSKGS (92 aa). Over residues 54 to 73 the composition is skewed to low complexity; the sequence is RSLSASSTDSFSSASYTGSS. Residues Asp220 and Glu245 each contribute to the substrate site. 246–248 contacts NAD(+); that stretch reads SVT. The substrate site is built by Lys275 and Asp279. Residues 311–316, Glu332, 388–390, Asn435, Lys515, 515–519, and Tyr519 contribute to the NAD(+) site; these read GDVGKG, MGH, and KPNYY.

The protein belongs to the adenosylhomocysteinase family. As to quaternary structure, interacts with Ahcy; the interaction may negatively regulate Ahcy catalytic activity. NAD(+) serves as cofactor.

Its function is as follows. Might play a role in the regulation of methionine metabolism possibly by binding and inactivating Ahcy. This chain is Adenosylhomocysteinase-like 1, found in Drosophila melanogaster (Fruit fly).